A 230-amino-acid polypeptide reads, in one-letter code: TorCAD operon transcriptional regulatory protein TorR (230 aa).

The 114-residue stretch at 4–117 folds into the Response regulatory domain; sequence HIVIVEDEPV…ELVVRVKNLL (114 aa). Asp-53 carries the post-translational modification 4-aspartylphosphate. Residues 132 to 227 constitute a DNA-binding region (ompR/PhoB-type); the sequence is DNCYRFAGYC…QHGEGYFLAA (96 aa).

As to quaternary structure, interacts with TorI. TorI binds to the effector domain of TorR. This interaction, which does not interfere with TorR DNA binding activity, probably prevents the recruitment of RNA polymerase to the torCAD promoter. Phosphorylated and dephosphorylated by TorS.

Its subcellular location is the cytoplasm. In terms of biological role, member of the two-component regulatory system TorS/TorR involved in the anaerobic utilization of trimethylamine-N-oxide (TMAO). Phosphorylated TorR activates the transcription of the torCAD operon by binding to four decameric boxes located in the torCAD promoter. Box1, 2 and 4 contain the DNA sequence 5'-CTGTTCATAT-3' and box3 contains the DNA sequence 5'-CCGTTCATCC-3'. Phosphorylated as well as unphosphorylated TorR negatively regulates its own expression by binding to box1 and 2. The polypeptide is TorCAD operon transcriptional regulatory protein TorR (torR) (Escherichia coli (strain K12)).